A 70-amino-acid polypeptide reads, in one-letter code: Turripeptide Pal9.2 (70 aa).

The signal sequence occupies residues methionine 1–glycine 20. The 50-residue stretch at glutamine 21 to cysteine 70 folds into the Kazal-like domain. Cystine bridges form between cysteine 26–cysteine 56, cysteine 30–cysteine 49, and cysteine 38–cysteine 70.

The protein belongs to the conopeptide P-like superfamily. As to expression, expressed by the venom duct.

It is found in the secreted. Functionally, acts as a neurotoxin by inhibiting an ion channel. May also act as a serine protease inhibitor, since it possess the kazal serine protease inhibitor signature. The sequence is that of Turripeptide Pal9.2 from Polystira albida (White giant-turris).